The chain runs to 254 residues: 5'-nucleotidase SurE (254 aa).

Positions 8, 9, 38, and 91 each coordinate a divalent metal cation.

It belongs to the SurE nucleotidase family. A divalent metal cation serves as cofactor.

It is found in the cytoplasm. It carries out the reaction a ribonucleoside 5'-phosphate + H2O = a ribonucleoside + phosphate. In terms of biological role, nucleotidase that shows phosphatase activity on nucleoside 5'-monophosphates. This Anaeromyxobacter sp. (strain K) protein is 5'-nucleotidase SurE.